Consider the following 693-residue polypeptide: Polyribonucleotide nucleotidyltransferase (693 aa).

Mg(2+)-binding residues include Asp489 and Asp495. The KH domain maps to 556-615 (PQIHVMNINPAKIKDVVGRGGATVKGIVEKTGAQIDTSDSGEVKVFAKDKKSMDMAVAMI). Residues 625-693 (GQVYKGKIVK…GRVKLSLVAR (69 aa)) enclose the S1 motif domain.

The protein belongs to the polyribonucleotide nucleotidyltransferase family. Component of the RNA degradosome, which is a multiprotein complex involved in RNA processing and mRNA degradation. Requires Mg(2+) as cofactor.

It localises to the cytoplasm. The catalysed reaction is RNA(n+1) + phosphate = RNA(n) + a ribonucleoside 5'-diphosphate. Involved in mRNA degradation. Catalyzes the phosphorolysis of single-stranded polyribonucleotides processively in the 3'- to 5'-direction. This chain is Polyribonucleotide nucleotidyltransferase, found in Francisella tularensis subsp. holarctica (strain OSU18).